We begin with the raw amino-acid sequence, 102 residues long: MEIKQIAVAGSLESSDMMITISPNDGQGIVLELDSSVEKQFGNHIRALIKTTLANLGVESATIEAVDKGALDCTIQARTIAAVHRAAGVEHYNWKEIDSWNA.

Ser14 bears the O-(phosphoribosyl dephospho-coenzyme A)serine mark.

This sequence belongs to the CitD family. Oligomer with a subunit composition of (alpha,beta,gamma)6.

The protein resides in the cytoplasm. Covalent carrier of the coenzyme of citrate lyase. In Streptococcus equi subsp. zooepidemicus (strain H70), this protein is Citrate lyase acyl carrier protein.